The following is a 100-amino-acid chain: Signal recognition particle 19 kDa protein (100 aa).

The protein belongs to the SRP19 family. As to quaternary structure, part of the signal recognition particle protein translocation system, which is composed of SRP and FtsY. Archaeal SRP consists of a 7S RNA molecule of 300 nucleotides and two protein subunits: SRP54 and SRP19.

Its subcellular location is the cytoplasm. In terms of biological role, involved in targeting and insertion of nascent membrane proteins into the cytoplasmic membrane. Binds directly to 7S RNA and mediates binding of the 54 kDa subunit of the SRP. The polypeptide is Signal recognition particle 19 kDa protein (Pyrococcus furiosus (strain ATCC 43587 / DSM 3638 / JCM 8422 / Vc1)).